A 321-amino-acid chain; its full sequence is L-carnitine dehydrogenase (321 aa).

14–19 (GAGVIG) contacts NAD(+).

This sequence belongs to the 3-hydroxyacyl-CoA dehydrogenase family. L-carnitine dehydrogenase subfamily. Homodimer.

The protein resides in the cytoplasm. It carries out the reaction carnitine + NAD(+) = 3-dehydrocarnitine + NADH + H(+). It participates in amine and polyamine metabolism; carnitine metabolism. Its function is as follows. Catalyzes the NAD(+)-dependent oxidation of L-carnitine to 3-dehydrocarnitine. This chain is L-carnitine dehydrogenase, found in Burkholderia mallei (strain ATCC 23344).